We begin with the raw amino-acid sequence, 146 residues long: Hemoglobin subunit beta (146 aa).

The region spanning 2–146 (HWSAEEKQLI…VAHALARKYH (145 aa)) is the Globin domain. Heme b contacts are provided by His-63 and His-92.

The protein belongs to the globin family. As to quaternary structure, heterotetramer of two alpha chains and two beta chains. Red blood cells.

Functionally, involved in oxygen transport from the lung to the various peripheral tissues. The protein is Hemoglobin subunit beta (HBB) of Stercorarius maccormicki (South polar skua).